We begin with the raw amino-acid sequence, 386 residues long: Patatin-2-Kuras 3 (386 aa).

The N-terminal stretch at 1-23 (MATTKSVLVLFFMILATTSSTCA) is a signal peptide. In terms of domain architecture, PNPLA spans 32-229 (LSIDGGGIKG…TVGDPALLSL (198 aa)). A GXGXXG motif is present at residues 36-41 (GGGIKG). The GXSXG motif lies at 75–79 (GTSTG). The active-site Nucleophile is S77. N115 carries N-linked (GlcNAc...) asparagine glycosylation. D215 acts as the Proton acceptor in catalysis. The short motif at 215-217 (DGA) is the DGA/G element. Residues 321–384 (ENALTGTTTE…DRKKLRANKA (64 aa)) adopt a coiled-coil conformation.

Belongs to the patatin family. Tuber.

It is found in the vacuole. Functionally, probable lipolytic acyl hydrolase (LAH), an activity which is thought to be involved in the response of tubers to pathogens. The sequence is that of Patatin-2-Kuras 3 (pat2-k3) from Solanum tuberosum (Potato).